The primary structure comprises 249 residues: INO80 complex subunit 1 (249 aa).

C2H2-type zinc fingers lie at residues 73 to 100 and 106 to 131; these read YTCEWDDCPRKGMVQTSRFALVAHLRSH and FICSVPECDRSFTRSDALAKHMRTVH.

As to quaternary structure, component of the INO80 chromatin remodeling complex.

It is found in the nucleus. The protein resides in the cytoplasm. Its function is as follows. Component of the INO80 complex which remodels chromatin by shifting nucleosomes and is involved in DNA repair. The sequence is that of INO80 complex subunit 1 (iec1) from Schizosaccharomyces pombe (strain 972 / ATCC 24843) (Fission yeast).